Here is a 205-residue protein sequence, read N- to C-terminus: MPSKKKKYNARFPPARIKKIMQTDEEIGKVAAAVPVIISRALELFLESLLKKACQVTQSRNAKTMTTSHLKQCIELEQQFDFLKDLVASVPDMQGDGEDNHVDGDKGPRRGRKPGSSGRKNGGTGSKGKDKKLSGTDSEQEDESEDTDTDGEEETPQLPPQASHPPAHFQSPPTPFIPFTSPLPLPPAPPGPSAADAEDEEDYDS.

In terms of domain architecture, Histone-fold spans 14–77 (PARIKKIMQT…SHLKQCIELE (64 aa)). Positions 91–205 (PDMQGDGEDN…DAEDEEDYDS (115 aa)) are disordered. Residues 98-108 (EDNHVDGDKGP) show a composition bias toward basic and acidic residues. Acidic residues predominate over residues 138–155 (SEQEDESEDTDTDGEEET). Pro residues predominate over residues 172–192 (PPTPFIPFTSPLPLPPAPPGP). Over residues 196–205 (DAEDEEDYDS) the composition is skewed to acidic residues.

This sequence belongs to the NC2 alpha/DRAP1 family. Heterodimer with DR1. Binds BTAF1. In terms of processing, phosphorylation reduces DNA binding, but has no effect on heterodimerization and TBP binding.

It localises to the nucleus. In terms of biological role, the association of the DR1/DRAP1 heterodimer with TBP results in a functional repression of both activated and basal transcription of class II genes. This interaction precludes the formation of a transcription-competent complex by inhibiting the association of TFIIA and/or TFIIB with TBP. Can bind to DNA on its own. The sequence is that of Dr1-associated corepressor (Drap1) from Mus musculus (Mouse).